Here is a 286-residue protein sequence, read N- to C-terminus: Nucleotide-binding protein HAPS_0087 (286 aa).

An ATP-binding site is contributed by 8-15 (GRSGSGKS). 56–59 (DVRN) contacts GTP.

This sequence belongs to the RapZ-like family.

Displays ATPase and GTPase activities. This is Nucleotide-binding protein HAPS_0087 from Glaesserella parasuis serovar 5 (strain SH0165) (Haemophilus parasuis).